The primary structure comprises 650 residues: DNA ligase (650 aa).

Residues D30–D34, S79–L80, and D108 each bind NAD(+). K110 serves as the catalytic N6-AMP-lysine intermediate. NAD(+) is bound by residues R131, E165, and K304. Residues C398, C401, C414, and C419 each coordinate Zn(2+). The region spanning P573–S650 is the BRCT domain.

The protein belongs to the NAD-dependent DNA ligase family. LigA subfamily. Mg(2+) is required as a cofactor. Mn(2+) serves as cofactor.

The catalysed reaction is NAD(+) + (deoxyribonucleotide)n-3'-hydroxyl + 5'-phospho-(deoxyribonucleotide)m = (deoxyribonucleotide)n+m + AMP + beta-nicotinamide D-nucleotide.. Its function is as follows. DNA ligase that catalyzes the formation of phosphodiester linkages between 5'-phosphoryl and 3'-hydroxyl groups in double-stranded DNA using NAD as a coenzyme and as the energy source for the reaction. It is essential for DNA replication and repair of damaged DNA. The polypeptide is DNA ligase (Wolinella succinogenes (strain ATCC 29543 / DSM 1740 / CCUG 13145 / JCM 31913 / LMG 7466 / NCTC 11488 / FDC 602W) (Vibrio succinogenes)).